The primary structure comprises 477 residues: Actin-related protein 7 (477 aa).

The protein belongs to the actin family. Forms a heterodimer with ARP9. Interacts with NPL6. Component of the two forms of the RSC complex composed of at least either RSC1 or RSC2, and ARP7, ARP9, LDB7, NPL6, RSC3, RSC30, RSC4, RSC58, RSC6, RSC8, RSC9, SFH1, STH1, HTL1 and probably RTT102. The complexes interact with histone and histone variant components of centromeric chromatin. Component of the SWI/SNF global transcription activator complex. The 1.14 MDa SWI/SNF complex is composed of 11 different subunits: one copy each of SWI1, SNF2/SWI2, SNF5, SNF12/SWP73, ARP7/SWP61, ARP9/SWP59; two copies each of SWI3, SNF6, SNF11, SWP82; and three copies of TAF14/SWP29.

The protein localises to the nucleus. Functionally, component of the chromatin structure remodeling complex (RSC), which is involved in transcription regulation and nucleosome positioning. RSC is responsible for the transfer of a histone octamer from a nucleosome core particle to naked DNA. The reaction requires ATP and involves an activated RSC-nucleosome intermediate. Remodeling reaction also involves DNA translocation, DNA twist and conformational change. As a reconfigurer of centromeric and flanking nucleosomes, RSC complex is required both for proper kinetochore function in chromosome segregation and, via a PKC1-dependent signaling pathway, for organization of the cellular cytoskeleton. This subunit is involved in transcriptional regulation. Heterodimer of ARP7 and ARP9 functions with HMG box proteins to facilitate proper chromatin architecture. Heterodimer formation is necessary for assembly into RSC complex. Part of the SWI/SNF complex, an ATP-dependent chromatin remodeling complex, is required for the positive and negative regulation of gene expression of a large number of genes. It changes chromatin structure by altering DNA-histone contacts within a nucleosome, leading eventually to a change in nucleosome position, thus facilitating or repressing binding of gene-specific transcription factors. This chain is Actin-related protein 7 (ARP7), found in Saccharomyces cerevisiae (strain ATCC 204508 / S288c) (Baker's yeast).